The following is an 895-amino-acid chain: Glutamate receptor 2.3 (895 aa).

Positions 1–23 (MRTEKLFFCILLVFFFCLEFNRG) are cleaved as a signal peptide. The Extracellular segment spans residues 24–582 (QNNGKTLVDV…ILFMKPLSWK (559 aa)). N-linked (GlcNAc...) asparagine glycosylation is found at asparagine 52, asparagine 203, asparagine 266, asparagine 330, asparagine 342, asparagine 477, and asparagine 542. A helical membrane pass occupies residues 583–603 (LWLTSFISFFLVGCTVWVLEY). Over 604-610 (KRNPDFS) the chain is Cytoplasmic. The chain crosses the membrane as a helical span at residues 611–631 (GPPRFQASTICWFAFSTMVFA). The Cytoplasmic segment spans residues 632–635 (PRER). A helical transmembrane segment spans residues 636 to 656 (VFSFWARALVIAWYFLVLVLT). Topologically, residues 657–830 (QSYTASLASL…FTSRQLDIDS (174 aa)) are extracellular. A helical membrane pass occupies residues 831-851 (FLFLFVGVLLVCVMALGNFTY). Residues 852-895 (CFLAKDQVSYLDKVEMSPCSSSQQMPVKRKTQLNMSQVHDQDSL) lie on the Cytoplasmic side of the membrane. Positions 873–895 (SQQMPVKRKTQLNMSQVHDQDSL) are disordered.

Belongs to the glutamate-gated ion channel (TC 1.A.10.1) family. May form heteromers. In terms of tissue distribution, expressed predominantly in roots.

The protein localises to the membrane. In terms of biological role, glutamate-gated receptor that probably acts as a non-selective cation channel. May be involved in light-signal transduction and calcium homeostasis via the regulation of calcium influx into cells. The chain is Glutamate receptor 2.3 (GLR2.3) from Arabidopsis thaliana (Mouse-ear cress).